A 301-amino-acid chain; its full sequence is Recombination-associated protein RdgC (301 aa).

It belongs to the RdgC family.

Its subcellular location is the cytoplasm. It is found in the nucleoid. Functionally, may be involved in recombination. In Stenotrophomonas maltophilia (strain R551-3), this protein is Recombination-associated protein RdgC.